The chain runs to 239 residues: Ribonuclease 3 (239 aa).

The RNase III domain maps to 12–137; sequence RAKLEGLIGH…LIAAIYLDGG (126 aa). A Mg(2+)-binding site is contributed by glutamate 50. Aspartate 54 is a catalytic residue. 2 residues coordinate Mg(2+): aspartate 123 and glutamate 126. Glutamate 126 is an active-site residue. The 70-residue stretch at 162 to 231 folds into the DRBM domain; that stretch reads DAKTELQEWS…ATKMLEREGI (70 aa).

Belongs to the ribonuclease III family. In terms of assembly, homodimer. Mg(2+) serves as cofactor.

The protein localises to the cytoplasm. It carries out the reaction Endonucleolytic cleavage to 5'-phosphomonoester.. Digests double-stranded RNA. Involved in the processing of primary rRNA transcript to yield the immediate precursors to the large and small rRNAs (23S and 16S). Processes some mRNAs, and tRNAs when they are encoded in the rRNA operon. Processes pre-crRNA and tracrRNA of type II CRISPR loci if present in the organism. The polypeptide is Ribonuclease 3 (Rhizobium johnstonii (strain DSM 114642 / LMG 32736 / 3841) (Rhizobium leguminosarum bv. viciae)).